A 448-amino-acid polypeptide reads, in one-letter code: Putative diacyglycerol O-acyltransferase MT3848 (448 aa).

The active-site Proton acceptor is the H136.

The protein belongs to the long-chain O-acyltransferase family.

It catalyses the reaction an acyl-CoA + a 1,2-diacyl-sn-glycerol = a triacyl-sn-glycerol + CoA. It functions in the pathway glycerolipid metabolism; triacylglycerol biosynthesis. This chain is Putative diacyglycerol O-acyltransferase MT3848, found in Mycobacterium tuberculosis (strain CDC 1551 / Oshkosh).